The primary structure comprises 469 residues: ATP-dependent protease ATPase subunit HslU (469 aa).

Residues Ile-24 and 66 to 71 (GVGKTE) each bind ATP. The tract at residues 159-179 (LFGSMNQPDEPAEEEVDQELK) is disordered. Residues Asp-282, Glu-347, and Arg-419 each coordinate ATP.

Belongs to the ClpX chaperone family. HslU subfamily. In terms of assembly, a double ring-shaped homohexamer of HslV is capped on each side by a ring-shaped HslU homohexamer. The assembly of the HslU/HslV complex is dependent on binding of ATP.

The protein localises to the cytoplasm. Functionally, ATPase subunit of a proteasome-like degradation complex; this subunit has chaperone activity. The binding of ATP and its subsequent hydrolysis by HslU are essential for unfolding of protein substrates subsequently hydrolyzed by HslV. HslU recognizes the N-terminal part of its protein substrates and unfolds these before they are guided to HslV for hydrolysis. The protein is ATP-dependent protease ATPase subunit HslU of Listeria innocua serovar 6a (strain ATCC BAA-680 / CLIP 11262).